We begin with the raw amino-acid sequence, 229 residues long: Peptidase E (229 aa).

Catalysis depends on charge relay system residues Ser-120, Asp-135, and His-157.

It belongs to the peptidase S51 family.

Its subcellular location is the cytoplasm. The catalysed reaction is Dipeptidase E catalyzes the hydrolysis of dipeptides Asp-|-Xaa. It does not act on peptides with N-terminal Glu, Asn or Gln, nor does it cleave isoaspartyl peptides.. Its function is as follows. Hydrolyzes dipeptides containing N-terminal aspartate residues. May play a role in allowing the cell to use peptide aspartate to spare carbon otherwise required for the synthesis of the aspartate family of amino acids. This chain is Peptidase E, found in Salmonella paratyphi A (strain AKU_12601).